Here is a 102-residue protein sequence, read N- to C-terminus: Large ribosomal subunit protein mL63 (102 aa).

It belongs to the mitochondrion-specific ribosomal protein mL63 family.

It localises to the mitochondrion. This Bos taurus (Bovine) protein is Large ribosomal subunit protein mL63 (MRPL57).